Here is a 255-residue protein sequence, read N- to C-terminus: Aliphatic sulfonates import ATP-binding protein SsuB (255 aa).

The 222-residue stretch at 12-233 folds into the ABC transporter domain; sequence LLLNAVSKHY…RLGSVRLAEL (222 aa). An ATP-binding site is contributed by 44 to 51; the sequence is GRSGGGKS.

This sequence belongs to the ABC transporter superfamily. Aliphatic sulfonates importer (TC 3.A.1.17.2) family. In terms of assembly, the complex is composed of two ATP-binding proteins (SsuB), two transmembrane proteins (SsuC) and a solute-binding protein (SsuA).

Its subcellular location is the cell inner membrane. It carries out the reaction ATP + H2O + aliphatic sulfonate-[sulfonate-binding protein]Side 1 = ADP + phosphate + aliphatic sulfonateSide 2 + [sulfonate-binding protein]Side 1.. In terms of biological role, part of the ABC transporter complex SsuABC involved in aliphatic sulfonates import. Responsible for energy coupling to the transport system. The polypeptide is Aliphatic sulfonates import ATP-binding protein SsuB (Escherichia coli O1:K1 / APEC).